Consider the following 115-residue polypeptide: Probable K(+)/H(+) antiporter subunit C (115 aa).

Transmembrane regions (helical) follow at residues 4-21 (ILSAGIGTLTASGVYLLL), 28-47 (VIIGLSLLSFAVNLFIFGMG), and 75-97 (ALVLTAIVIGFAMTALFLVVLLA).

This sequence belongs to the CPA3 antiporters (TC 2.A.63) subunit C family. As to quaternary structure, may form a hetero-oligomeric complex that consists of six subunits: PhaAB, PhaC, PhaD, PhaE, PhaF and PhaG.

The protein resides in the cell membrane. Functionally, part of a K(+) efflux system which is required for the adaptation of R.meliloti to alkaline pH as well as for the infection process during symbiotic nodule development. This is Probable K(+)/H(+) antiporter subunit C (phaC) from Rhizobium meliloti (strain 1021) (Ensifer meliloti).